A 52-amino-acid chain; its full sequence is uncharacterized protein (52 aa).

Residues 7–27 (MFQLFVFIIFAAVVFAAVTGF) traverse the membrane as a helical segment.

The protein resides in the membrane. This is an uncharacterized protein from Bacillus subtilis (strain 168).